Here is a 343-residue protein sequence, read N- to C-terminus: Heat-inducible transcription repressor HrcA (343 aa).

This sequence belongs to the HrcA family.

Its function is as follows. Negative regulator of class I heat shock genes (grpE-dnaK-dnaJ and groELS operons). Prevents heat-shock induction of these operons. This is Heat-inducible transcription repressor HrcA from Thermobifida fusca (strain YX).